Reading from the N-terminus, the 158-residue chain is Glycine/sarcosine/betaine reductase complex component A (158 aa).

Sec-44 is a catalytic residue. A non-standard amino acid (selenocysteine) is located at residue Sec-44.

It belongs to the GrdA family. As to quaternary structure, monomer. Component of the glycine, sarcosine and betaine reductase complexes, together with components B and C.

The enzyme catalyses acetyl phosphate + [thioredoxin]-disulfide + NH4(+) + H2O = [thioredoxin]-dithiol + glycine + phosphate + H(+). The catalysed reaction is acetyl phosphate + methylamine + [thioredoxin]-disulfide + H2O = sarcosine + [thioredoxin]-dithiol + phosphate + H(+). It carries out the reaction acetyl phosphate + trimethylamine + [thioredoxin]-disulfide + H2O = glycine betaine + [thioredoxin]-dithiol + phosphate + H(+). In terms of biological role, in the first step of glycine, betaine and sarcosine reductases, the substrate is bound to component PB via a Schiff base intermediate. Then the PB-activated substrate is nucleophilically attacked by the selenol anion of component PA to transform it to a carboxymethylated selenoether and the respective amine. By action of component PC, acetyl phosphate is formed, leaving component PA in its oxidized state. Finally component PA becomes reduced by the thioredoxin system to start a new catalytic cycle of reductive deamination. The sequence is that of Glycine/sarcosine/betaine reductase complex component A from Alkaliphilus metalliredigens (strain QYMF).